The primary structure comprises 82 residues: High-potential iron-sulfur protein (82 aa).

Positions 42, 45, 60, and 74 each coordinate [4Fe-4S] cluster.

It belongs to the high-potential iron-sulfur protein (HiPIP) family. In terms of assembly, homodimer.

The protein resides in the periplasm. In terms of biological role, specific class of high-redox-potential 4Fe-4S ferredoxins. Functions in anaerobic electron transport in most purple and in some other photosynthetic bacteria and in at least one genus (Paracoccus) of halophilic, denitrifying bacteria. The sequence is that of High-potential iron-sulfur protein (hip) from Marichromatium purpuratum (Chromatium purpuratum).